The primary structure comprises 348 residues: D-erythrose-4-phosphate dehydrogenase (348 aa).

NAD(+) contacts are provided by residues arginine 12–isoleucine 13 and arginine 81. Residues serine 154 to threonine 156, arginine 200, threonine 213 to lysine 214, and arginine 236 each bind substrate. Catalysis depends on cysteine 155, which acts as the Nucleophile. Asparagine 318 lines the NAD(+) pocket.

Belongs to the glyceraldehyde-3-phosphate dehydrogenase family. Epd subfamily. As to quaternary structure, homotetramer.

The protein localises to the cytoplasm. It catalyses the reaction D-erythrose 4-phosphate + NAD(+) + H2O = 4-phospho-D-erythronate + NADH + 2 H(+). Its pathway is cofactor biosynthesis; pyridoxine 5'-phosphate biosynthesis; pyridoxine 5'-phosphate from D-erythrose 4-phosphate: step 1/5. Catalyzes the NAD-dependent conversion of D-erythrose 4-phosphate to 4-phosphoerythronate. This Salmonella dublin (strain CT_02021853) protein is D-erythrose-4-phosphate dehydrogenase.